The following is a 125-amino-acid chain: Probable growth factor FPV211 (125 aa).

A signal peptide spans 1–48 (MKEPLIEVKREYNLIKTLTGKKFVVSTSIVVVLLIINMIFYGIRIHEL). The region spanning 80–120 (LFEKCKSKFNNFCIYGECMNIINLDKKFCICNKGYTGNRCD) is the EGF-like domain. 3 cysteine pairs are disulfide-bonded: cysteine 84-cysteine 97, cysteine 92-cysteine 108, and cysteine 110-cysteine 119.

It localises to the secreted. The protein is Probable growth factor FPV211 of Vertebrata (FPV).